A 139-amino-acid chain; its full sequence is Aspartate 1-decarboxylase (139 aa).

S25 acts as the Schiff-base intermediate with substrate; via pyruvic acid in catalysis. S25 carries the pyruvic acid (Ser) modification. T57 is a substrate binding site. Y58 (proton donor) is an active-site residue. Substrate is bound at residue 73–75; that stretch reads GAA.

The protein belongs to the PanD family. Heterooctamer of four alpha and four beta subunits. It depends on pyruvate as a cofactor. Post-translationally, is synthesized initially as an inactive proenzyme, which is activated by self-cleavage at a specific serine bond to produce a beta-subunit with a hydroxyl group at its C-terminus and an alpha-subunit with a pyruvoyl group at its N-terminus.

It localises to the cytoplasm. The catalysed reaction is L-aspartate + H(+) = beta-alanine + CO2. It participates in cofactor biosynthesis; (R)-pantothenate biosynthesis; beta-alanine from L-aspartate: step 1/1. In terms of biological role, catalyzes the pyruvoyl-dependent decarboxylation of aspartate to produce beta-alanine. In Mycobacterium bovis (strain BCG / Tokyo 172 / ATCC 35737 / TMC 1019), this protein is Aspartate 1-decarboxylase.